Reading from the N-terminus, the 465-residue chain is UDP-N-acetylmuramate--L-alanine ligase (465 aa).

125–131 (GTHGKTT) serves as a coordination point for ATP.

Belongs to the MurCDEF family.

It localises to the cytoplasm. It catalyses the reaction UDP-N-acetyl-alpha-D-muramate + L-alanine + ATP = UDP-N-acetyl-alpha-D-muramoyl-L-alanine + ADP + phosphate + H(+). Its pathway is cell wall biogenesis; peptidoglycan biosynthesis. In terms of biological role, cell wall formation. The chain is UDP-N-acetylmuramate--L-alanine ligase from Deinococcus geothermalis (strain DSM 11300 / CIP 105573 / AG-3a).